Reading from the N-terminus, the 107-residue chain is N(4)-acetylcytidine amidohydrolase (107 aa).

Positions 6 to 102 (TFYRRFQADI…RLYVISFSLV (97 aa)) constitute an ASCH domain. Residue lysine 20 is the Proton acceptor of the active site. The Nucleophile role is filled by threonine 23. Glutamate 73 functions as the Proton donor in the catalytic mechanism.

This sequence belongs to the N(4)-acetylcytidine amidohydrolase family.

The catalysed reaction is N(4)-acetylcytidine + H2O = cytidine + acetate + H(+). The enzyme catalyses N(4)-acetyl-2'-deoxycytidine + H2O = 2'-deoxycytidine + acetate + H(+). It carries out the reaction N(4)-acetylcytosine + H2O = cytosine + acetate + H(+). In terms of biological role, catalyzes the hydrolysis of N(4)-acetylcytidine (ac4C). The chain is N(4)-acetylcytidine amidohydrolase from Edwardsiella ictaluri (strain 93-146).